A 139-amino-acid chain; its full sequence is Envelope glycoprotein N (139 aa).

Residues methionine 1–valine 100 lie on the Virion surface side of the membrane. A helical transmembrane segment spans residues serine 101 to valine 121. Over phenylalanine 122–tyrosine 139 the chain is Intravirion.

The protein belongs to the herpesviridae glycoprotein N family. In terms of assembly, interacts (via N-terminus) with gM (via N-terminus). The gM-gN heterodimer forms the gCII complex.

The protein resides in the virion membrane. It localises to the host membrane. It is found in the host Golgi apparatus. The protein localises to the host trans-Golgi network. In terms of biological role, envelope glycoprotein necessary for proper maturation of gM and modulation of its membrane fusion activity. Also plays a critical role in virion morphogenesis. In Mus musculus (Mouse), this protein is Envelope glycoprotein N.